The primary structure comprises 203 residues: Protein GrpE (203 aa).

Polar residues predominate over residues 1–20 (MSDNGDNNTKSPQHNNPQPN). The disordered stretch occupies residues 1-46 (MSDNGDNNTKSPQHNNPQPNEKSDGKVQPGQPQVNPQRKFTAGINK).

Belongs to the GrpE family. In terms of assembly, homodimer.

The protein localises to the cytoplasm. Its function is as follows. Participates actively in the response to hyperosmotic and heat shock by preventing the aggregation of stress-denatured proteins, in association with DnaK and GrpE. It is the nucleotide exchange factor for DnaK and may function as a thermosensor. Unfolded proteins bind initially to DnaJ; upon interaction with the DnaJ-bound protein, DnaK hydrolyzes its bound ATP, resulting in the formation of a stable complex. GrpE releases ADP from DnaK; ATP binding to DnaK triggers the release of the substrate protein, thus completing the reaction cycle. Several rounds of ATP-dependent interactions between DnaJ, DnaK and GrpE are required for fully efficient folding. In Ehrlichia chaffeensis (strain ATCC CRL-10679 / Arkansas), this protein is Protein GrpE.